A 64-amino-acid chain; its full sequence is Delta-buthitoxin-Hj2a (64 aa).

4 disulfides stabilise this stretch: Cys12/Cys63, Cys16/Cys36, Cys22/Cys46, and Cys26/Cys48. Arg64 bears the Arginine amide mark.

It belongs to the long (4 C-C) scorpion toxin superfamily. Sodium channel inhibitor family. Alpha subfamily. In terms of tissue distribution, expressed by the venom gland.

The protein localises to the secreted. Functionally, this non-amidated recombinant toxin slows fast inactivation on Nav1.1/SCN1A (EC(50)=52.8 nM), Nav1.4/SN4A (EC(50)=32 nM), Nav1.5/SCN5A (EC(50)=116.7 nM), Nav1.6/SCN8A (EC(50)=46.3 nM), and Nav1.7/SCN9A (EC(50)=147.4 nM) voltage-gated sodium channels. On Nav1.1/SCN1A channel, acts as an agonist by inducing a shift in both the voltage dependence of channel inactivation (alpha-toxin activity) and activation (beta-toxin activity). The sequence is that of Delta-buthitoxin-Hj2a from Hottentotta judaicus (Black scorpion).